The primary structure comprises 350 residues: Cobalt-precorrin-5B C(1)-methyltransferase (350 aa).

Belongs to the CbiD family.

The enzyme catalyses Co-precorrin-5B + S-adenosyl-L-methionine = Co-precorrin-6A + S-adenosyl-L-homocysteine. The protein operates within cofactor biosynthesis; adenosylcobalamin biosynthesis; cob(II)yrinate a,c-diamide from sirohydrochlorin (anaerobic route): step 6/10. In terms of biological role, catalyzes the methylation of C-1 in cobalt-precorrin-5B to form cobalt-precorrin-6A. The chain is Cobalt-precorrin-5B C(1)-methyltransferase from Sulfurisphaera tokodaii (strain DSM 16993 / JCM 10545 / NBRC 100140 / 7) (Sulfolobus tokodaii).